Here is a 222-residue protein sequence, read N- to C-terminus: Ribosomal RNA small subunit methyltransferase G (222 aa).

Residues Gly80, Leu85, 131 to 132 (VE), and Arg148 each bind S-adenosyl-L-methionine.

Belongs to the methyltransferase superfamily. RNA methyltransferase RsmG family.

The protein localises to the cytoplasm. It carries out the reaction guanosine(527) in 16S rRNA + S-adenosyl-L-methionine = N(7)-methylguanosine(527) in 16S rRNA + S-adenosyl-L-homocysteine. Its function is as follows. Specifically methylates the N7 position of guanine in position 527 of 16S rRNA. The protein is Ribosomal RNA small subunit methyltransferase G of Polynucleobacter asymbioticus (strain DSM 18221 / CIP 109841 / QLW-P1DMWA-1) (Polynucleobacter necessarius subsp. asymbioticus).